Consider the following 206-residue polypeptide: GTP cyclohydrolase 1 (206 aa).

Zn(2+) contacts are provided by C95, H98, and C166.

Belongs to the GTP cyclohydrolase I family. Toroid-shaped homodecamer, composed of two pentamers of five dimers.

It carries out the reaction GTP + H2O = 7,8-dihydroneopterin 3'-triphosphate + formate + H(+). It participates in cofactor biosynthesis; 7,8-dihydroneopterin triphosphate biosynthesis; 7,8-dihydroneopterin triphosphate from GTP: step 1/1. This Bartonella henselae (strain ATCC 49882 / DSM 28221 / CCUG 30454 / Houston 1) (Rochalimaea henselae) protein is GTP cyclohydrolase 1.